We begin with the raw amino-acid sequence, 211 residues long: Fin bud initiation factor homolog (211 aa).

Residues 1–18 (MVFLKFFCMSFFCHLCQG) form the signal peptide. N-linked (GlcNAc...) asparagine glycosylation is present at N30.

It belongs to the FIBIN family. In terms of assembly, homodimer; disulfide-linked. Seems to also exist as monomers.

Its subcellular location is the secreted. It is found in the golgi apparatus. The protein localises to the endoplasmic reticulum. This Homo sapiens (Human) protein is Fin bud initiation factor homolog (FIBIN).